A 352-amino-acid chain; its full sequence is Ion-translocating oxidoreductase complex subunit D (352 aa).

The next 4 membrane-spanning stretches (helical) occupy residues 20 to 40 (IMLLVLLAAVPGIAAQLWFFG), 42 to 62 (GTLVQILLASVSTLLAEALVL), 89 to 109 (IPPLAPWWMVVLGTVFAVIIA), and 123 to 143 (PAMIGYVVLLISFPVQMTSWL). Thr187 is subject to FMN phosphoryl threonine. 5 consecutive transmembrane segments (helical) span residues 214–234 (ILAGAGWQWVNLAWLAGGLWL), 242–262 (WHIPLSFLVTLALCATLGWLF), 267–287 (LAAPQIHLLSGATMLGAFFIL), 301–321 (LIFGALAGLLVWLIRSFGGYP), and 322–342 (DGVAFAVLLANITVPLIDYYT).

This sequence belongs to the NqrB/RnfD family. In terms of assembly, the complex is composed of six subunits: RsxA, RsxB, RsxC, RsxD, RsxE and RsxG. FMN is required as a cofactor.

The protein localises to the cell inner membrane. Its function is as follows. Part of a membrane-bound complex that couples electron transfer with translocation of ions across the membrane. Required to maintain the reduced state of SoxR. The protein is Ion-translocating oxidoreductase complex subunit D of Shigella boydii serotype 18 (strain CDC 3083-94 / BS512).